The chain runs to 68 residues: Beta-defensin 1 (68 aa).

Positions 1-21 (MRTSYLLLFTLCLLLSEMASG) are cleaved as a signal peptide. A propeptide spanning residues 22-32 (DNFLTGLGHRS) is cleaved from the precursor. Disulfide bonds link cysteine 37/cysteine 66, cysteine 44/cysteine 59, and cysteine 49/cysteine 67.

Belongs to the beta-defensin family. Monomer. Homodimer.

Its subcellular location is the secreted. It is found in the membrane. Its function is as follows. Has bactericidal activity. May act as a ligand for C-C chemokine receptor CCR6. Positively regulates the sperm motility and bactericidal activity in a CCR6-dependent manner. Binds to CCR6 and triggers Ca2+ mobilization in the sperm which is important for its motility. In Macaca mulatta (Rhesus macaque), this protein is Beta-defensin 1 (DEFB1).